The following is a 50-amino-acid chain: U23-theraphotoxin-Cg1a 2 (50 aa).

Intrachain disulfides connect C22–C36, C29–C41, and C35–C47.

This sequence belongs to the neurotoxin 10 (Hwtx-1) family. 64 (Jztx-20) subfamily. In terms of tissue distribution, expressed by the venom gland.

Its subcellular location is the secreted. Its function is as follows. Probable ion channel inhibitor. This chain is U23-theraphotoxin-Cg1a 2, found in Chilobrachys guangxiensis (Chinese earth tiger tarantula).